An 89-amino-acid polypeptide reads, in one-letter code: Small ribosomal subunit protein uS19 (89 aa).

It belongs to the universal ribosomal protein uS19 family.

Functionally, protein S19 forms a complex with S13 that binds strongly to the 16S ribosomal RNA. The protein is Small ribosomal subunit protein uS19 of Ruthia magnifica subsp. Calyptogena magnifica.